A 527-amino-acid chain; its full sequence is Probable pectinesterase/pectinesterase inhibitor 32 (527 aa).

The first 24 residues, 1 to 24 (MAKFRQMGSSIFFLFLIIISLCSA), serve as a signal peptide directing secretion. The segment at 25 to 165 (HKEAFSSTDL…GTTVRNLLTM (141 aa)) is pectinesterase inhibitor 32. N-linked (GlcNAc...) asparagine glycosylation is found at N110, N209, N224, and N280. The segment at 214–511 (DAVVAADGTG…FTVSQLIQGN (298 aa)) is pectinesterase 32. Residues T289 and Q319 each contribute to the substrate site. Catalysis depends on D342, which acts as the Proton donor; for pectinesterase activity. A disulfide bond links C356 and C376. The Nucleophile; for pectinesterase activity role is filled by D363. An N-linked (GlcNAc...) asparagine glycan is attached at N423. Residues R431 and W433 each coordinate substrate. N-linked (GlcNAc...) asparagine glycosylation is found at N494 and N501.

It in the N-terminal section; belongs to the PMEI family. In the C-terminal section; belongs to the pectinesterase family. Expressed in siliques.

It is found in the secreted. The protein localises to the cell wall. The enzyme catalyses [(1-&gt;4)-alpha-D-galacturonosyl methyl ester](n) + n H2O = [(1-&gt;4)-alpha-D-galacturonosyl](n) + n methanol + n H(+). It functions in the pathway glycan metabolism; pectin degradation; 2-dehydro-3-deoxy-D-gluconate from pectin: step 1/5. Acts in the modification of cell walls via demethylesterification of cell wall pectin. This chain is Probable pectinesterase/pectinesterase inhibitor 32 (PME32), found in Arabidopsis thaliana (Mouse-ear cress).